Reading from the N-terminus, the 377-residue chain is SH2/SH3 adapter protein Nck1 (377 aa).

The residue at position 2 (Ala-2) is an N-acetylalanine. Residues 2 to 61 (AEEVVVVAKFDYVAQQEQELDIKKNERLWLLDDSKSWWRVRNSMNKTGFVPSNYVERKNS) form the SH3 1 domain. Ser-85, Ser-91, and Ser-96 each carry phosphoserine. A Phosphotyrosine modification is found at Tyr-105. Positions 106 to 165 (DLNMPAFVKFNYMAEREDELSLIKGTKVIVMEKCSDGWWRGSYNGQIGWFPSNYVTEEGD) constitute an SH3 2 domain. Ser-166 is modified (phosphoserine). An SH3 3 domain is found at 190-252 (QVLHVVQALY…PKNYVTIMQN (63 aa)). One can recognise an SH2 domain in the interval 282-376 (WYYGKVTRHQ…GEKLYLVKHL (95 aa)).

In terms of assembly, interacts (via SH2 domain and SH3 domain 2) with EGFR. Interacts with PAK1 and SOS1. Interacts (via SH3 domains) with PKN2. Associates with BLNK, PLCG1, VAV1 and NCK1 in a B-cell antigen receptor-dependent fashion. Interacts with SOCS7. This interaction is required for nuclear import. Part of a complex containing PPP1R15B, PP1 and NCK1. Interacts with RALGPS1. Interacts with CAV2 (tyrosine phosphorylated form). Interacts with ADAM15. Interacts with FASLG. Directly interacts with RASA1. Interacts with isoform 4 of MINK1. Interacts with FLT1 (tyrosine phosphorylated). Interacts with KDR (tyrosine phosphorylated). Interacts (via SH2 domain) with EPHB1; activates the JUN cascade to regulate cell adhesion. Interacts with EPHA2. Interacts (via SH2 domain) with PDGFRB (tyrosine phosphorylated). Interacts with the inactive form of EIF2AK2/PKR. Interacts with PTPN1. Interacts with INSR/insulin receptor (in response to insulin stimulation); this interaction may mediate PTPN1 recruitment leading to INSR dephosphorylation. Interacts with CD3E (via Proline-rich sequence); the interaction is ligand dependent but independent of tyrosine kinase activation. Interacts with EGFR. Interacts with IRS1. Phosphorylated on Ser and Tyr residues. Phosphorylated in response to activation of EGFR and FcERI. Phosphorylated by activated PDGFRB.

The protein localises to the cytoplasm. It is found in the endoplasmic reticulum. The protein resides in the nucleus. Its function is as follows. Adapter protein which associates with tyrosine-phosphorylated growth factor receptors, such as KDR and PDGFRB, or their cellular substrates. Maintains low levels of EIF2S1 phosphorylation by promoting its dephosphorylation by PP1. Plays a role in the DNA damage response, not in the detection of the damage by ATM/ATR, but for efficient activation of downstream effectors, such as that of CHEK2. Plays a role in ELK1-dependent transcriptional activation in response to activated Ras signaling. Modulates the activation of EIF2AK2/PKR by dsRNA. May play a role in cell adhesion and migration through interaction with ephrin receptors. Also acts as an adpater protein for the T cell receptor complex (TCR-CD3E). Upon ligand engagement, is recruited by CD3E and promotes maturation of the immune synapse and T cell activation. In Mus musculus (Mouse), this protein is SH2/SH3 adapter protein Nck1 (Nck1).